Here is a 370-residue protein sequence, read N- to C-terminus: MRSGYTLPVFACAGAIAALHWLRQRQSLQVGLVDLIEPAQMAEVPIEQVAGLSENMALAITRSDPGDNIDLTKNTPIWAVVEWGQGGGEQVTIKGGEGIGKQVNADNRAAIYSYAQRLLQANLTRLLAPEESIIVTIILPEGRSLAVRTSNSAFGVVEGLSLLGTTGISQPLSSPDQLDAFRSELQHKASLYASLVFCIGENGLDLARKIGINAEKLVKTANWLGPMLVEAEALGVKEILLFGYHGKLMKLAGGIFHTHHHLADGRREVLATHCALGGLSKQDIEIVFHAPTAEAALKHLKALDSSTGSDWVNQVYSAIAETIDSRCQEYMQSHSSRGTAATICGSILFDRDRKIIVKSKTACNLMGNLC.

The protein belongs to the CbiD family.

The catalysed reaction is Co-precorrin-5B + S-adenosyl-L-methionine = Co-precorrin-6A + S-adenosyl-L-homocysteine. Its pathway is cofactor biosynthesis; adenosylcobalamin biosynthesis; cob(II)yrinate a,c-diamide from sirohydrochlorin (anaerobic route): step 6/10. Catalyzes the methylation of C-1 in cobalt-precorrin-5B to form cobalt-precorrin-6A. The chain is Cobalt-precorrin-5B C(1)-methyltransferase from Trichormus variabilis (strain ATCC 29413 / PCC 7937) (Anabaena variabilis).